A 311-amino-acid chain; its full sequence is Coproporphyrin III ferrochelatase 1 (311 aa).

Fe-coproporphyrin III-binding positions include tyrosine 12, arginine 29, 45–46, serine 53, and tyrosine 124; that span reads RY. Fe(2+) contacts are provided by histidine 182 and glutamate 263.

It belongs to the ferrochelatase family.

It localises to the cytoplasm. The catalysed reaction is Fe-coproporphyrin III + 2 H(+) = coproporphyrin III + Fe(2+). It participates in porphyrin-containing compound metabolism; protoheme biosynthesis. Its function is as follows. Involved in coproporphyrin-dependent heme b biosynthesis. Catalyzes the insertion of ferrous iron into coproporphyrin III to form Fe-coproporphyrin III. The chain is Coproporphyrin III ferrochelatase 1 from Bacillus cereus (strain ATCC 14579 / DSM 31 / CCUG 7414 / JCM 2152 / NBRC 15305 / NCIMB 9373 / NCTC 2599 / NRRL B-3711).